Consider the following 119-residue polypeptide: Ubiquinone biosynthesis accessory factor UbiK (119 aa).

Residues L79–R99 are a coiled coil. The span at L96–K106 shows a compositional bias: basic and acidic residues. The disordered stretch occupies residues L96–E119. A compositionally biased stretch (pro residues) spans P109–E119.

This sequence belongs to the UbiK family. Homotrimer.

It is found in the cytoplasm. The protein operates within cofactor biosynthesis; ubiquinone biosynthesis. Required for efficient ubiquinone (coenzyme Q) biosynthesis under aerobic conditions. UbiK is probably an accessory factor of Ubi enzymes and facilitates ubiquinone biosynthesis by acting as an assembly factor, a targeting factor, or both. Dispensable for ubiquinone biosynthesis under anaerobiosis. Required for proliferation in macrophages and virulence in mice. Significantly contributes to colonization and invasion as well as host inflammation and innate immunity after infection. In vitro, has membrane fusogenic activity at acidic pH. This Salmonella typhimurium (strain LT2 / SGSC1412 / ATCC 700720) protein is Ubiquinone biosynthesis accessory factor UbiK.